Reading from the N-terminus, the 178-residue chain is GTP-dependent dephospho-CoA kinase (178 aa).

Positions 43, 44, 45, 62, 64, and 120 each coordinate GTP.

It belongs to the GTP-dependent DPCK family.

The catalysed reaction is 3'-dephospho-CoA + GTP = GDP + CoA + H(+). It participates in cofactor biosynthesis; coenzyme A biosynthesis. In terms of biological role, catalyzes the GTP-dependent phosphorylation of the 3'-hydroxyl group of dephosphocoenzyme A to form coenzyme A (CoA). The polypeptide is GTP-dependent dephospho-CoA kinase (Natronomonas pharaonis (strain ATCC 35678 / DSM 2160 / CIP 103997 / JCM 8858 / NBRC 14720 / NCIMB 2260 / Gabara) (Halobacterium pharaonis)).